The sequence spans 430 residues: Asparagine--tRNA ligase (430 aa).

This sequence belongs to the class-II aminoacyl-tRNA synthetase family. As to quaternary structure, homodimer.

The protein localises to the cytoplasm. It catalyses the reaction tRNA(Asn) + L-asparagine + ATP = L-asparaginyl-tRNA(Asn) + AMP + diphosphate + H(+). This chain is Asparagine--tRNA ligase, found in Staphylococcus aureus (strain MW2).